The primary structure comprises 76 residues: Small ribosomal subunit protein bS18 (76 aa).

Belongs to the bacterial ribosomal protein bS18 family. In terms of assembly, part of the 30S ribosomal subunit. Forms a tight heterodimer with protein bS6.

In terms of biological role, binds as a heterodimer with protein bS6 to the central domain of the 16S rRNA, where it helps stabilize the platform of the 30S subunit. The sequence is that of Small ribosomal subunit protein bS18 from Alcanivorax borkumensis (strain ATCC 700651 / DSM 11573 / NCIMB 13689 / SK2).